We begin with the raw amino-acid sequence, 765 residues long: Probable beta-glucosidase M (765 aa).

Positions 1–19 (MHSISALLSLLGGLALSSA) are cleaved as a signal peptide. N-linked (GlcNAc...) asparagine glycosylation is found at Asn24, Asn71, Asn93, Asn126, and Asn258. Asp286 is an active-site residue. Residues Asn314, Asn321, Asn432, Asn519, Asn541, and Asn647 are each glycosylated (N-linked (GlcNAc...) asparagine).

The protein belongs to the glycosyl hydrolase 3 family.

Its subcellular location is the secreted. It carries out the reaction Hydrolysis of terminal, non-reducing beta-D-glucosyl residues with release of beta-D-glucose.. Its pathway is glycan metabolism; cellulose degradation. Its function is as follows. Beta-glucosidases are one of a number of cellulolytic enzymes involved in the degradation of cellulosic biomass. Catalyzes the last step releasing glucose from the inhibitory cellobiose. The polypeptide is Probable beta-glucosidase M (bglM) (Aspergillus niger (strain ATCC MYA-4892 / CBS 513.88 / FGSC A1513)).